The primary structure comprises 207 residues: Ras-related protein Rab-8B (207 aa).

GTP is bound by residues serine 17, glycine 18, valine 19, glycine 20, lysine 21, threonine 22, cysteine 23, threonine 35, serine 39, and threonine 40. Threonine 22 contributes to the Mg(2+) binding site. 2 short sequence motifs (switch) span residues aspartate 31 to phenylalanine 45 and aspartate 63 to glycine 80. 2 residues coordinate Mg(2+): threonine 40 and aspartate 63. Glycine 66 is a GTP binding site. Phosphothreonine is present on threonine 72. Residues asparagine 121, lysine 122, aspartate 124, alanine 152, and lysine 153 each coordinate GTP. A phosphoserine mark is found at serine 180 and serine 183. Position 204 is a cysteine methyl ester (cysteine 204). The S-geranylgeranyl cysteine moiety is linked to residue cysteine 204. The propeptide at leucine 205 to leucine 207 is removed in mature form.

The protein belongs to the small GTPase superfamily. Rab family. In terms of assembly, associated with actin, delta-catenin and alpha and beta tubulins. Interacts with OTOF. Interacts with PEX5R. Interacts with RAB3IP. Interacts with VIM. Interacts with CDH1. Interacts with MICALL2. Interacts with GDI1, GDI2, CHML and CHM; phosphorylation at Thr-72 disrupts these interactions. Interacts with MICAL1. Requires Mg(2+) as cofactor. In terms of processing, phosphorylation of Thr-72 in the switch II region by LRRK2 prevents the association of RAB regulatory proteins, including CHM, CHML and RAB GDP dissociation inhibitors GDI1 and GDI2.

The protein resides in the cell membrane. Its subcellular location is the cytoplasmic vesicle. It localises to the phagosome membrane. It is found in the endosome membrane. The enzyme catalyses GTP + H2O = GDP + phosphate + H(+). Its activity is regulated as follows. Regulated by guanine nucleotide exchange factors (GEFs) including RAB3IP/RABIN8 which promotes the exchange of bound GDP for free GTP. Regulated by GTPase activating proteins (GAPs) which increase the GTP hydrolysis activity. Inhibited by GDP dissociation inhibitors (GDIs). Functionally, the small GTPases Rab are key regulators of intracellular membrane trafficking, from the formation of transport vesicles to their fusion with membranes. Rabs cycle between an inactive GDP-bound form and an active GTP-bound form that is able to recruit to membranes different sets of downstream effectors directly responsible for vesicle formation, movement, tethering and fusion. RAB8B may be involved in polarized vesicular trafficking and neurotransmitter release. May participate in cell junction dynamics in Sertoli cells. May also participate in the export of a subset of neosynthesized proteins through a Rab8-Rab10-Rab11-dependent endososomal export route. The chain is Ras-related protein Rab-8B (RAB8B) from Bos taurus (Bovine).